Reading from the N-terminus, the 496-residue chain is 3-octaprenyl-4-hydroxybenzoate carboxy-lyase (496 aa).

N181 provides a ligand contact to Mn(2+). Residues 184–186 (IYR), 198–200 (RWL), and 203–204 (RG) contribute to the prenylated FMN site. E247 contributes to the Mn(2+) binding site. D296 serves as the catalytic Proton donor.

It belongs to the UbiD family. Homohexamer. Prenylated FMN is required as a cofactor. The cofactor is Mn(2+).

It localises to the cell membrane. It catalyses the reaction a 4-hydroxy-3-(all-trans-polyprenyl)benzoate + H(+) = a 2-(all-trans-polyprenyl)phenol + CO2. Its pathway is cofactor biosynthesis; ubiquinone biosynthesis. Its function is as follows. Catalyzes the decarboxylation of 3-octaprenyl-4-hydroxy benzoate to 2-octaprenylphenol, an intermediate step in ubiquinone biosynthesis. This is 3-octaprenyl-4-hydroxybenzoate carboxy-lyase from Azoarcus sp. (strain BH72).